Consider the following 1040-residue polypeptide: Eukaryotic translation initiation factor 3 subunit A (1040 aa).

A coiled-coil region spans residues 92 to 121 (LKKFIELAEKKVTEAQTKADEIQSSLESAA). One can recognise a PCI domain in the interval 339–523 (MTKAASFVLL…GVLTFDSDVF (185 aa)). Residues 608-906 (RVIIEKKKEA…AEARRAARKA (299 aa)) adopt a coiled-coil conformation. Composition is skewed to basic and acidic residues over residues 617–632 (AATD…EETR) and 795–901 (EVSE…EARR). Disordered regions lie at residues 617–641 (AATD…QQLQ) and 795–1040 (EVSE…QQNQ). Composition is skewed to low complexity over residues 908-917 (LEPAAPAARP), 945-955 (KEAAGGAAPEA), 978-993 (SGSS…NGAP), and 1004-1018 (SSSS…TPGS).

Belongs to the eIF-3 subunit A family. As to quaternary structure, component of the eukaryotic translation initiation factor 3 (eIF-3) complex.

It is found in the cytoplasm. In terms of biological role, RNA-binding component of the eukaryotic translation initiation factor 3 (eIF-3) complex, which is involved in protein synthesis of a specialized repertoire of mRNAs and, together with other initiation factors, stimulates binding of mRNA and methionyl-tRNAi to the 40S ribosome. The eIF-3 complex specifically targets and initiates translation of a subset of mRNAs involved in cell proliferation. In Aspergillus terreus (strain NIH 2624 / FGSC A1156), this protein is Eukaryotic translation initiation factor 3 subunit A (tif32).